A 530-amino-acid polypeptide reads, in one-letter code: MSVDTYTETTKIDKLLKKPTSHFQLSTTQLYNKILDNNEGVLTELGAVNASTGKYTGRSPKDKFFVSEPSYRDNIDWGEINQPIDEETFLKLYHKVLDYLDKKDELYVFKGYAGSDKDTMLKLTVINELAWHNLFAKNMFIRPESKEEATKIKPNFTIVSAPHFKADPEVDGTKSETFVIISFKHKVILIGGTEYAGEMKKGIFSVMNYLLPMQDIMSMHCSANVGEKGDVALFFGLSGTGKTTLSADPHRKLIGDDEHGWNKNGVFNIEGGCYAKAINLSKEKEPQIFDAIKYGAILENTVVAEDGSVDFEDNRYTENTRAAYPINHIDNIVVPSKAAHPNTIIFLTADAFGVIPPISKLNKDQAMYHFLSGFTSKLAGTERGVTEPEPSFSTCFGAPFFPLHPTVYADLLGELIDLHDVDVYLVNTGWTGGKYGVGRRISLHYTRQMVNQAISGKLKNAEYTKDSTFGLSIPVEIEDVPKTILNPINAWSDKEKYKTQAEDLIQRFEKNFEKFGEKVEHIAEKGSFNK.

Residues Arg-58, Tyr-195, and Lys-201 each contribute to the substrate site. Residues Lys-201, His-220, and 236–244 (GLSGTGKTT) contribute to the ATP site. 2 residues coordinate Mn(2+): Lys-201 and His-220. Residue Asp-257 participates in Mn(2+) binding. ATP is bound by residues Glu-285, Arg-321, 440–441 (RI), and Thr-446. Arg-321 provides a ligand contact to substrate.

This sequence belongs to the phosphoenolpyruvate carboxykinase (ATP) family. Mn(2+) serves as cofactor.

The protein localises to the cytoplasm. It carries out the reaction oxaloacetate + ATP = phosphoenolpyruvate + ADP + CO2. It functions in the pathway carbohydrate biosynthesis; gluconeogenesis. Its function is as follows. Involved in the gluconeogenesis. Catalyzes the conversion of oxaloacetate (OAA) to phosphoenolpyruvate (PEP) through direct phosphoryl transfer between the nucleoside triphosphate and OAA. The protein is Phosphoenolpyruvate carboxykinase (ATP) of Staphylococcus aureus (strain MRSA252).